The sequence spans 426 residues: 3-phosphoshikimate 1-carboxyvinyltransferase (426 aa).

Positions 22, 23, and 27 each coordinate 3-phosphoshikimate. Phosphoenolpyruvate is bound at residue lysine 22. Phosphoenolpyruvate is bound by residues glycine 96 and arginine 124. The 3-phosphoshikimate site is built by serine 170, serine 171, glutamine 172, serine 198, aspartate 314, asparagine 337, and lysine 341. Glutamine 172 lines the phosphoenolpyruvate pocket. Aspartate 314 acts as the Proton acceptor in catalysis. Phosphoenolpyruvate-binding residues include arginine 345, arginine 387, and lysine 412.

It belongs to the EPSP synthase family. In terms of assembly, monomer.

It is found in the cytoplasm. It catalyses the reaction 3-phosphoshikimate + phosphoenolpyruvate = 5-O-(1-carboxyvinyl)-3-phosphoshikimate + phosphate. Its pathway is metabolic intermediate biosynthesis; chorismate biosynthesis; chorismate from D-erythrose 4-phosphate and phosphoenolpyruvate: step 6/7. Catalyzes the transfer of the enolpyruvyl moiety of phosphoenolpyruvate (PEP) to the 5-hydroxyl of shikimate-3-phosphate (S3P) to produce enolpyruvyl shikimate-3-phosphate and inorganic phosphate. The chain is 3-phosphoshikimate 1-carboxyvinyltransferase from Shewanella baltica (strain OS155 / ATCC BAA-1091).